The primary structure comprises 139 residues: MVEKFVGTWKIADSHNFGEYLKAIGAPKELSDGGDATTPTLYISQKDGDKMTVKIENGPPTFLDTQVKFKLGEEFDEFPSDRRKGVKSVVNLVGEKLVYVQKWDGKETTYVREIKDGKLVVTLTMGDVVAVRSYRRATE.

(4Z,15Z)-bilirubin IXalpha contacts are provided by residues N57, T61, S80, R112, and 132–134 (RSY).

It belongs to the calycin superfamily. Fatty-acid binding protein (FABP) family. In terms of assembly, monomer. Detected in small-diameter muscle fibers from the white muscle layer from juvenile animals (glass eels) (at protein level). Detected in small-diameter muscle fibers from juvenile animals (glass eels).

It localises to the cytoplasm. In terms of biological role, beta-barrel protein that binds unconjugated bilirubin with high affinity. Excitation of the bilirubin-bound protein gives rise to green fluorescence, both under normoxia and hypoxia. The apoprotein is not fluorescent. Does not emit fluorescence in the presence of ditauro-bilirubin, urobilin or biliverdin. This chain is Bilirubin-inducible fluorescent protein UnaG, found in Anguilla japonica (Japanese eel).